Here is a 561-residue protein sequence, read N- to C-terminus: Acylcarnitine hydrolase (561 aa).

A signal peptide spans 1–26 (MARKQPHSWLNAVLFGLLLILIHVWG). Cysteines 97 and 125 form a disulfide. S230 (acyl-ester intermediate) is an active-site residue. A disulfide bond links C282 and C293. Residues E347 and H459 each act as charge relay system in the active site.

The protein belongs to the type-B carboxylesterase/lipase family. In terms of tissue distribution, expressed in liver, stomach and kidney.

Its subcellular location is the microsome. The protein localises to the endoplasmic reticulum. The enzyme catalyses all-trans-retinyl hexadecanoate + H2O = all-trans-retinol + hexadecanoate + H(+). The catalysed reaction is an O-acyl-(R)-carnitine + H2O = (R)-carnitine + a fatty acid + H(+). Its function is as follows. Hydrolase with high activity towards palmitoylcarnitine. Is also active with p-nitrophenylacetate and alpha-naphthylacetate. May also hydrolyze retinyl esters. The sequence is that of Acylcarnitine hydrolase from Rattus norvegicus (Rat).